The following is a 185-amino-acid chain: Ribosome-recycling factor (185 aa).

A disordered region spans residues 142–165 (IVKDGDAGEDEGSRAEKELDGLTK).

This sequence belongs to the RRF family.

The protein resides in the cytoplasm. In terms of biological role, responsible for the release of ribosomes from messenger RNA at the termination of protein biosynthesis. May increase the efficiency of translation by recycling ribosomes from one round of translation to another. In Renibacterium salmoninarum (strain ATCC 33209 / DSM 20767 / JCM 11484 / NBRC 15589 / NCIMB 2235), this protein is Ribosome-recycling factor.